We begin with the raw amino-acid sequence, 1121 residues long: Cuscuta receptor 1 (1121 aa).

The N-terminal stretch at 1 to 20 (MGNIKFLLLVFFLIVVVVNG) is a signal peptide. Topologically, residues 21 to 1058 (CWEEERNALL…EESSELEDIQ (1038 aa)) are extracellular. N-linked (GlcNAc...) asparagine glycosylation is present at N91. LRR repeat units lie at residues 98-122 (FKSLQVLLLSSQNIIGWTKNEGFSK), 126-152 (LPNLKEVDLQYNPIDPKVLLSSLCWIS), 185-209 (LSNLRELWFEGYEINDINILSALGE), 210-233 (LRNLEKLILDDNNFNSTIFSSLKI), 234-259 (FPSLKHLNLAANEINGNVEMNDIIDL), 260-282 (SNLEYLDLSDNNIHSFATTKGNK), 284-308 (MTSLRSLLLGSSYSNSSRVIRSLKS), and 309-331 (FSSLKSLSYKNSNLTSPSIIYAL). A glycan (N-linked (GlcNAc...) asparagine) is linked at N224. N298, N321, and N333 each carry an N-linked (GlcNAc...) asparagine glycan. An LRR 9 repeat occupies 334–360 (LSTVEYLYFKGSSLNDNFLPNIGQMTS). 2 N-linked (GlcNAc...) asparagine glycosylation sites follow: N372 and N406. LRR repeat units follow at residues 383 to 406 (LKYIEELDFLNNNFVGTLPLCLGN), 407 to 432 (LTSLRWLSLAGNNLHGNIASHSIWRR), 433 to 457 (LTSLEYLDIADNQFDVPLSFSQFSD), 459 to 479 (KKLIYLNVGYNTIITDTEYQN), 507 to 531 (QYDLRILAIEGNQLQGKFPTWLLEN), 556 to 580 (HLHLEAVDVSNNKLNGHIPQNMSLA), 581 to 605 (FPKLLSLNMSHNHLEGPIPSKISGI), 607 to 628 (LTILDLSVNFLSGEVPGDLAVV), 630 to 654 (SPQLFYLRLSNNKLKGKIFSEEFRP), 655 to 678 (HVLSFLYLNDNNFEGALPSNVFLS), 680 to 701 (LITLDASRNNFSGEIPGCTRDN), 702 to 725 (RRLLQLDLSKNHLQGLIPVEICNL), 726 to 749 (KIINVLAISENKISGSIPSCVSSL), 751 to 772 (LKHIHLQKNQLGGELGHVIFNF), 773 to 796 (SSLITLDLRYNNFAGNIPYTIGSL), 797 to 820 (SNLNYLLLSNNKLEGDIPTQICML), 822 to 846 (NLSIVDLSFNKLYGPLPPCLGYLTQ), 914 to 938 (LKYMSGIDLSSNRLTGEIPVELGNM), 939 to 961 (SNIHALNLSHNHLNGRIPNTFSN), 962 to 986 (LQEIESLDLSCNRLNGSIPVGLLEL), and 988 to 1012 (SLAVFSVAYNNLSGAVPDFKAQFGT). N-linked (GlcNAc...) asparagine glycans are attached at residues N531, N576, and N588. N689 carries N-linked (GlcNAc...) asparagine glycosylation. An N-linked (GlcNAc...) asparagine glycan is attached at N771. N822, N937, N945, N976, N998, N1014, and N1041 each carry an N-linked (GlcNAc...) asparagine glycan. A helical membrane pass occupies residues 1059–1079 (CFYIGFVVSFGAILLGLAAAL). The Cytoplasmic portion of the chain corresponds to 1080-1121 (CLNRHWRRAWFRMIEALMFYCYYFVLDNIVTPIKSRWYKNVG).

The protein belongs to the RLP family. In terms of assembly, interacts with an 11 kDa glycine-rich protein (GRP) of C.reflexa. Interacts with SOBIR1 and SOBIR1-like kinases; presence or absence of GRP has no effect on interaction.

It is found in the cell membrane. Its subcellular location is the cell surface. Functionally, involved in plant defense. Contributes to resistance against parasitic plant C.reflexa. Acts as a receptor for the 11 kDa glycine-rich protein (GRP) of C.reflexa inducing immune responses such as emission of stress-related phytohormone ethylene, reactive oxygen species (ROS) release, and hypersensitive cell death. Recognizes a specific pathogen-associated molecular pattern (PAMP), a cysteine-rich peptide 21 (crip21), from GRP located on the cell wall of C.reflexa. This chain is Cuscuta receptor 1, found in Solanum lycopersicum (Tomato).